The primary structure comprises 131 residues: Aspartate 1-decarboxylase (131 aa).

Serine 25 serves as the catalytic Schiff-base intermediate with substrate; via pyruvic acid. The residue at position 25 (serine 25) is a Pyruvic acid (Ser). Position 57 (threonine 57) interacts with substrate. Catalysis depends on tyrosine 58, which acts as the Proton donor. 73–75 contacts substrate; sequence GAA.

The protein belongs to the PanD family. As to quaternary structure, heterooctamer of four alpha and four beta subunits. Requires pyruvate as cofactor. In terms of processing, is synthesized initially as an inactive proenzyme, which is activated by self-cleavage at a specific serine bond to produce a beta-subunit with a hydroxyl group at its C-terminus and an alpha-subunit with a pyruvoyl group at its N-terminus.

The protein localises to the cytoplasm. It catalyses the reaction L-aspartate + H(+) = beta-alanine + CO2. It functions in the pathway cofactor biosynthesis; (R)-pantothenate biosynthesis; beta-alanine from L-aspartate: step 1/1. Catalyzes the pyruvoyl-dependent decarboxylation of aspartate to produce beta-alanine. This is Aspartate 1-decarboxylase from Chlorobium phaeobacteroides (strain DSM 266 / SMG 266 / 2430).